Consider the following 1558-residue polypeptide: Hybrid PKS-NRPS synthetase TAS1 (1558 aa).

The condensation (C) domain stretch occupies residues 27-392 (YPMTKAQESL…RGLETPRAQV (366 aa)). The tract at residues 522–919 (TYKELNERSN…TITDVMPEVT (398 aa)) is adenylation (A) domain. The interval 995–1028 (TSGSSSSATPSLVSSGSTTCRSPSTSSCSDSRSA) is disordered. A Carrier domain is found at 1027–1104 (SASPAITSAV…GQVDLLCGSE (78 aa)). An O-(pantetheine 4'-phosphoryl)serine modification is found at serine 1063. The disordered stretch occupies residues 1116–1144 (LGRGRTKSPAKIVDSQGRSSPSTIPSGGR). Residues 1131–1140 (QGRSSPSTIP) show a composition bias toward polar residues. In terms of domain architecture, Ketosynthase family 3 (KS3) spans 1145-1558 (KSEIAIVGIS…GVNAHCVLRS (414 aa)). Residues cysteine 1308, histidine 1444, and asparagine 1484 each act as for beta-ketoacyl synthase activity in the active site.

This sequence in the N-terminal section; belongs to the NRP synthetase family. Pantetheine 4'-phosphate is required as a cofactor.

It catalyses the reaction acetoacetyl-CoA + L-isoleucine + ATP = tenuazonic acid + AMP + diphosphate + CoA + 2 H(+). In terms of biological role, hybrid PKS-NRPS synthetase that mediates the biosynthesis of the toxin tenuazonic acid (TeA), an inhibitor of protein biosynthesis on ribosomes by suppressing the release of new protein. TAS1 alone is sufficient for TeA synthesis via the condensation of isoleucine (Ile) with acetoacetyl-CoA by the N-terminal NRPS module and subsequent cyclization conducted by the C-terminal KS domain. The sequence is that of Hybrid PKS-NRPS synthetase TAS1 from Gloeophyllum trabeum (strain ATCC 11539 / FP-39264 / Madison 617) (Brown rot fungus).